The sequence spans 254 residues: 3-beta-hydroxysteroid dehydrogenase (254 aa).

NAD(+) is bound by residues 12 to 40 (VTGG…SDIN) and D61. Residue S139 participates in substrate binding. Y152 functions as the Proton acceptor in the catalytic mechanism. K156 lines the NAD(+) pocket.

Belongs to the short-chain dehydrogenases/reductases (SDR) family. Homotetramer.

The enzyme catalyses testosterone + NAD(+) = androst-4-ene-3,17-dione + NADH + H(+). The catalysed reaction is testosterone + NADP(+) = androst-4-ene-3,17-dione + NADPH + H(+). The sequence is that of 3-beta-hydroxysteroid dehydrogenase from Comamonas testosteroni (Pseudomonas testosteroni).